Reading from the N-terminus, the 88-residue chain is Large ribosomal subunit protein bL27 (88 aa).

Residues 1-24 (MATKKSGGSSGNGRDSRGRRLGVK) are disordered.

It belongs to the bacterial ribosomal protein bL27 family.

The chain is Large ribosomal subunit protein bL27 from Ehrlichia canis (strain Jake).